Consider the following 294-residue polypeptide: UDP-3-O-acyl-N-acetylglucosamine deacetylase (294 aa).

Positions 75, 232, and 236 each coordinate Zn(2+). The active-site Proton donor is the histidine 259.

The protein belongs to the LpxC family. Requires Zn(2+) as cofactor.

It carries out the reaction a UDP-3-O-[(3R)-3-hydroxyacyl]-N-acetyl-alpha-D-glucosamine + H2O = a UDP-3-O-[(3R)-3-hydroxyacyl]-alpha-D-glucosamine + acetate. The protein operates within glycolipid biosynthesis; lipid IV(A) biosynthesis; lipid IV(A) from (3R)-3-hydroxytetradecanoyl-[acyl-carrier-protein] and UDP-N-acetyl-alpha-D-glucosamine: step 2/6. Functionally, catalyzes the hydrolysis of UDP-3-O-myristoyl-N-acetylglucosamine to form UDP-3-O-myristoylglucosamine and acetate, the committed step in lipid A biosynthesis. The polypeptide is UDP-3-O-acyl-N-acetylglucosamine deacetylase (Campylobacter hominis (strain ATCC BAA-381 / DSM 21671 / CCUG 45161 / LMG 19568 / NCTC 13146 / CH001A)).